The chain runs to 139 residues: Pre-hexon-linking protein VIII (139 aa).

A propeptide spanning residues 35-69 (GAAGDYFKSPTSARTLIPLTASCLRPDGVFQLGGG) is cleaved from the precursor.

It belongs to the adenoviridae hexon-linking protein family. Interacts with the peripentonal hexons as well as the hexons in the facets. Part of a complex composed of the core-capsid bridging protein, the endosome lysis protein VI and the hexon-linking protein VIII; these interactions bridge the virus core to the capsid. In terms of processing, cleaved by the viral protease during virion maturation. May cause the middle segment to be shed from the capsid.

It localises to the host nucleus. The protein resides in the virion. Functionally, structural component of the virion that acts as a cement protein on the capsid interior and which glue the peripentonal hexons and group-of-nine hexons together. The chain is Pre-hexon-linking protein VIII from Bovine adenovirus B serotype 3 (BAdV-3).